The sequence spans 309 residues: MSIRIIPQDELGSSEKRTADMIPPLLFPRLKNLYNRRAERLRELAENNPLGDYLRFAALIAHAQEVVLYDHPLEMDLTARIKEASAQGKPPLDIHVLPRDKHWQKLLMALIAELKPEMSGPALAVIENLEKASTQELEDMASALFASDFSSVSSDKAPFIWAALSLYWAQMANLIPGKARAEYGEQRQYCPVCGSMPVSSMVQIGTTQGLRYLHCNLCETEWHVVRVKCSNCEQSGKLHYWSLDDEQAAIKAESCDDCDTYLKILYQEKDPKIEAVADDLASLVLDARMEQEGYARSSINPFLFPGEGE.

The protein belongs to the FdhE family.

Its subcellular location is the cytoplasm. Necessary for formate dehydrogenase activity. The sequence is that of Protein FdhE from Escherichia coli (strain K12 / MC4100 / BW2952).